A 205-amino-acid polypeptide reads, in one-letter code: uncharacterized protein (205 aa).

Residues 1–19 (MKTLCVLSIFLALLGGLCT) form the signal peptide. The segment covering 40–133 (VSSVASTSTP…PKTSKNNPKT (94 aa)) has biased composition (low complexity). The interval 40 to 135 (VSSVASTSTP…TSKNNPKTQE (96 aa)) is disordered. A helical transmembrane segment spans residues 147-167 (GILYLFILLLIIFVIILICFI).

The protein localises to the host membrane. This is an uncharacterized protein from Equine herpesvirus 2 (strain 86/87) (EHV-2).